Reading from the N-terminus, the 189-residue chain is Putative manganese efflux pump MntP (189 aa).

Transmembrane regions (helical) follow at residues 3–23, 41–61, 62–82, 104–124, 132–152, and 168–188; these read PVATLFLAFAMSTDAFAAAIG, LIFGVIEALTPLVGWFLGKAA, AQYVSAWDHWIAFSLLLVLGA, FWLLALTGFATSIDAMAVGAG, IYSTAAAIGLATMAMVTIGVM, and AGGIVLIGIGSTILAEHLNIF.

The protein belongs to the MntP (TC 9.B.29) family.

The protein localises to the cell inner membrane. Probably functions as a manganese efflux pump. The protein is Putative manganese efflux pump MntP of Paraburkholderia phytofirmans (strain DSM 17436 / LMG 22146 / PsJN) (Burkholderia phytofirmans).